The primary structure comprises 200 residues: dITP/XTP pyrophosphatase (200 aa).

8–13 (TRNAGK) is a substrate binding site. The Proton acceptor role is filled by Asp-72. Asp-72 is a binding site for Mg(2+). Substrate is bound by residues Ser-73, 155–158 (FGYD), Lys-178, and 183–184 (HR).

This sequence belongs to the HAM1 NTPase family. Homodimer. It depends on Mg(2+) as a cofactor.

The enzyme catalyses XTP + H2O = XMP + diphosphate + H(+). It catalyses the reaction dITP + H2O = dIMP + diphosphate + H(+). The catalysed reaction is ITP + H2O = IMP + diphosphate + H(+). Pyrophosphatase that catalyzes the hydrolysis of nucleoside triphosphates to their monophosphate derivatives, with a high preference for the non-canonical purine nucleotides XTP (xanthosine triphosphate), dITP (deoxyinosine triphosphate) and ITP. Seems to function as a house-cleaning enzyme that removes non-canonical purine nucleotides from the nucleotide pool, thus preventing their incorporation into DNA/RNA and avoiding chromosomal lesions. In Streptomyces coelicolor (strain ATCC BAA-471 / A3(2) / M145), this protein is dITP/XTP pyrophosphatase.